Reading from the N-terminus, the 441-residue chain is Myocyte-specific enhancer factor 2C (441 aa).

The 61-residue stretch at 1–61 (MGRKKIQITR…NKLFQYASTD (61 aa)) folds into the MADS-box domain. At lysine 4 the chain carries N6-acetyllysine. The segment at residues 58 to 86 (ASTDMDKVLLKYTEYNEPHESRTNSDIVE) is a DNA-binding region (mef2-type). Serine 59 carries the post-translational modification Phosphoserine; by CK2. A disordered region spans residues 91–116 (KGLNGCDSPDPDADDSVGHSPESEDK). Serine 98, serine 106, and serine 110 each carry phosphoserine. N6-acetyllysine occurs at positions 116 and 119. Residues 180–224 (NSMSPGVTHRPPSAGNTGGLMGGDLTSGAGTSAGNGYGNPRNSPG) form a disordered region. Serine 222 and serine 228 each carry phosphoserine. Lysine 234 and lysine 239 each carry N6-acetyllysine. The residue at position 240 (serine 240) is a Phosphoserine. Residues lysine 252 and lysine 264 each carry the N6-acetyllysine modification. A beta domain region spans residues 271-278 (SEDVDLLL). Residues threonine 293 and threonine 300 each carry the phosphothreonine; by MAPK7 and MAPK14 modification. Residues 353-441 (QHLHSMPPSA…RMRLSEGWAT (89 aa)) are disordered. A compositionally biased stretch (polar residues) spans 362–377 (ALSQLGDRTTTPSRYP). Residue serine 387 is modified to Phosphoserine; by MAPK7. Positions 387-400 (SPVDSLSSCSSSYD) are enriched in low complexity. Residues 401 to 411 (GSDREDHRNEF) are compositionally biased toward basic and acidic residues. Serine 413 is modified (phosphoserine).

This sequence belongs to the MEF2 family. As to quaternary structure, forms a complex with class II HDACs in undifferentiating cells. On myogenic differentiation, HDACs are released into the cytoplasm allowing MEF2s to interact with other proteins for activation. Interacts with EP300 in differentiating cells; the interaction acetylates MEF2C leading to increased DNA binding and activation. Interacts with HDAC7 and CARM1. Interacts with HDAC4, HDAC7 and HDAC9; the interaction with HDACs represses transcriptional activity. Interacts with LPIN1. Interacts with MYOCD. Interacts with AKAP13. Interacts with FOXK1; the interaction inhibits MEF2C transactivation activity. Interacts (via N-terminus) with HABP4; this interaction decreases DNA-binding activity of MEF2C in myocardial cells in response to mechanical stress. Interacts with JPH2; interaction specifically takes place with the Junctophilin-2 N-terminal fragment cleavage product of JPH2. Interacts (via MADS box) with SOX18. Interacts with PHF7; the interaction promotes MEF2C binding to its transcription targets. Post-translationally, phosphorylation on Ser-59 enhances DNA binding activity. In terms of processing, acetylated by p300 on several sites in diffentiating myocytes. Acetylation on Lys-4 increases DNA binding and transactivation. Proteolytically cleaved in cerebellar granule neurons, probably by caspase 7, following neurotoxicity.

It localises to the nucleus. It is found in the cytoplasm. The protein localises to the sarcoplasm. Transcription activator which binds specifically to the MEF2 element present in the regulatory regions of many muscle-specific genes. Controls cardiac morphogenesis and myogenesis, and is also involved in vascular development. Enhances transcriptional activation mediated by SOX18. Plays an essential role in hippocampal-dependent learning and memory by suppressing the number of excitatory synapses and thus regulating basal and evoked synaptic transmission. Crucial for normal neuronal development, distribution, and electrical activity in the neocortex. Necessary for proper development of megakaryocytes and platelets and for bone marrow B-lymphopoiesis. Required for B-cell survival and proliferation in response to BCR stimulation, efficient IgG1 antibody responses to T-cell-dependent antigens and for normal induction of germinal center B-cells. May also be involved in neurogenesis and in the development of cortical architecture. This chain is Myocyte-specific enhancer factor 2C, found in Bos taurus (Bovine).